Consider the following 637-residue polypeptide: Penicillin-binding protein 1A (637 aa).

A transglycosylase region spans residues 62 to 224; the sequence is LIADLGSERR…NQYDPYSHPE (163 aa). Glu-91 acts as the Proton donor; for transglycosylase activity in catalysis. Residues 298-612 form a transpeptidase region; it reads EVYTNVDSKV…RLTPIVGDGF (315 aa). The active-site Acyl-ester intermediate; for transpeptidase activity is Ser-371.

In the N-terminal section; belongs to the glycosyltransferase 51 family. The protein in the C-terminal section; belongs to the transpeptidase family.

It is found in the secreted. The catalysed reaction is [GlcNAc-(1-&gt;4)-Mur2Ac(oyl-L-Ala-gamma-D-Glu-L-Lys-D-Ala-D-Ala)](n)-di-trans,octa-cis-undecaprenyl diphosphate + beta-D-GlcNAc-(1-&gt;4)-Mur2Ac(oyl-L-Ala-gamma-D-Glu-L-Lys-D-Ala-D-Ala)-di-trans,octa-cis-undecaprenyl diphosphate = [GlcNAc-(1-&gt;4)-Mur2Ac(oyl-L-Ala-gamma-D-Glu-L-Lys-D-Ala-D-Ala)](n+1)-di-trans,octa-cis-undecaprenyl diphosphate + di-trans,octa-cis-undecaprenyl diphosphate + H(+). It carries out the reaction Preferential cleavage: (Ac)2-L-Lys-D-Ala-|-D-Ala. Also transpeptidation of peptidyl-alanyl moieties that are N-acyl substituents of D-alanine.. The protein operates within cell wall biogenesis; peptidoglycan biosynthesis. Functionally, cell wall formation. The chain is Penicillin-binding protein 1A (ponA) from Streptococcus oralis.